Consider the following 247-residue polypeptide: Protein FAM133B (247 aa).

Disordered regions lie at residues 19-38 (SRGP…NRPR) and 70-247 (KKEL…PDSP). Positions 70-80 (KKELEKHREKL) are enriched in basic and acidic residues. A Phosphoserine modification is found at Ser-82. Positions 89–102 (KKRQRKKKEKKKSG) are enriched in basic residues. Residues 103–119 (RYSSSSSSSSDSSSSSS) show a composition bias toward low complexity. The span at 128 to 140 (QGKRRKKKKNRSH) shows a compositional bias: basic residues. Basic and acidic residues predominate over residues 165–176 (KDGTEKEKDIKG). Ser-191, Ser-192, Ser-194, and Ser-196 each carry phosphoserine. The span at 211-221 (SSEEREKATEK) shows a compositional bias: basic and acidic residues. Positions 222–239 (TKKKKKHKKHSKKKKKKA) are enriched in basic residues.

This sequence belongs to the FAM133 family.

This Homo sapiens (Human) protein is Protein FAM133B (FAM133B).